The following is a 353-amino-acid chain: Photosystem II protein D1 (353 aa).

The residue at position 2 (T2) is an N-acetylthreonine. T2 carries the phosphothreonine modification. 3 consecutive transmembrane segments (helical) span residues 29–46 (YIGW…TATS), 118–133 (HFLL…EWEL), and 142–156 (WIAV…AATA). H118 provides a ligand contact to chlorophyll a. Position 126 (Y126) interacts with pheophytin a. Residues D170 and E189 each coordinate [CaMn4O5] cluster. Residues 197-218 (FHMLGVAGVFGGSLFSAMHGSL) traverse the membrane as a helical segment. H198 contacts chlorophyll a. A quinone contacts are provided by residues H215 and 264–265 (SF). Fe cation is bound at residue H215. H272 provides a ligand contact to Fe cation. Residues 274–288 (FLTAWPVVGIWFTAL) form a helical membrane-spanning segment. H332, E333, D342, and A344 together coordinate [CaMn4O5] cluster. Positions 345 to 353 (AVEAPSTNG) are excised as a propeptide.

It belongs to the reaction center PufL/M/PsbA/D family. As to quaternary structure, PSII is composed of 1 copy each of membrane proteins PsbA, PsbB, PsbC, PsbD, PsbE, PsbF, PsbH, PsbI, PsbJ, PsbK, PsbL, PsbM, PsbT, PsbX, PsbY, PsbZ, Psb30/Ycf12, at least 3 peripheral proteins of the oxygen-evolving complex and a large number of cofactors. It forms dimeric complexes. The D1/D2 heterodimer binds P680, chlorophylls that are the primary electron donor of PSII, and subsequent electron acceptors. It shares a non-heme iron and each subunit binds pheophytin, quinone, additional chlorophylls, carotenoids and lipids. D1 provides most of the ligands for the Mn4-Ca-O5 cluster of the oxygen-evolving complex (OEC). There is also a Cl(-1) ion associated with D1 and D2, which is required for oxygen evolution. The PSII complex binds additional chlorophylls, carotenoids and specific lipids. serves as cofactor. In terms of processing, tyr-161 forms a radical intermediate that is referred to as redox-active TyrZ, YZ or Y-Z. C-terminally processed by CTPA; processing is essential to allow assembly of the oxygen-evolving complex and thus photosynthetic growth.

It localises to the plastid. The protein resides in the chloroplast thylakoid membrane. The catalysed reaction is 2 a plastoquinone + 4 hnu + 2 H2O = 2 a plastoquinol + O2. Photosystem II (PSII) is a light-driven water:plastoquinone oxidoreductase that uses light energy to abstract electrons from H(2)O, generating O(2) and a proton gradient subsequently used for ATP formation. It consists of a core antenna complex that captures photons, and an electron transfer chain that converts photonic excitation into a charge separation. The D1/D2 (PsbA/PsbD) reaction center heterodimer binds P680, the primary electron donor of PSII as well as several subsequent electron acceptors. This chain is Photosystem II protein D1, found in Barbarea verna (Land cress).